The primary structure comprises 139 residues: Thyrotropin subunit beta (139 aa).

The N-terminal stretch at 1-20 is a signal peptide; it reads MELSVAMCGLLCLLFSQAVP. Cystine bridges form between Cys-22/Cys-72, Cys-36/Cys-87, Cys-39/Cys-127, Cys-47/Cys-103, Cys-51/Cys-105, and Cys-108/Cys-115. A glycan (N-linked (GlcNAc...) asparagine) is linked at Asn-43.

This sequence belongs to the glycoprotein hormones subunit beta family. Heterodimer of a common alpha chain and a unique beta chain which confers biological specificity to thyrotropin, lutropin, follitropin and gonadotropin.

The protein resides in the secreted. Functionally, indispensable for the control of thyroid structure and metabolism. May play some role in the biological processes of the immature fishes. In Salmo salar (Atlantic salmon), this protein is Thyrotropin subunit beta (tshb).